We begin with the raw amino-acid sequence, 124 residues long: Class I hydrophobin 1 (124 aa).

A signal peptide spans 1 to 18; the sequence is MRFSIATVVLSLAAMVVA. Cystine bridges form between Cys-35-Cys-85, Cys-43-Cys-79, Cys-44-Cys-63, and Cys-86-Cys-97.

Belongs to the fungal hydrophobin family.

Its subcellular location is the secreted. It is found in the cell wall. Aerial growth, conidiation, and dispersal of filamentous fungi in the environment rely upon a capability of their secreting small amphipathic proteins called hydrophobins (HPBs) with low sequence identity. Class I can self-assemble into an outermost layer of rodlet bundles on aerial cell surfaces, conferring cellular hydrophobicity that supports fungal growth, development and dispersal; whereas Class II form highly ordered films at water-air interfaces through intermolecular interactions but contribute nothing to the rodlet structure. In Botryotinia fuckeliana, hydrophobins are not involved in conferring surface hydrophobicity to conidia and aerial hyphae and their function in sclerotia and fruiting bodies remains to be investigated. The protein is Class I hydrophobin 1 (Bhp1) of Botryotinia fuckeliana (strain B05.10) (Noble rot fungus).